A 360-amino-acid chain; its full sequence is DNA replication and repair protein RecF (360 aa).

30–37 is an ATP binding site; the sequence is GDNAQGKT.

This sequence belongs to the RecF family.

It is found in the cytoplasm. Functionally, the RecF protein is involved in DNA metabolism; it is required for DNA replication and normal SOS inducibility. RecF binds preferentially to single-stranded, linear DNA. It also seems to bind ATP. This chain is DNA replication and repair protein RecF, found in Lachnoclostridium phytofermentans (strain ATCC 700394 / DSM 18823 / ISDg) (Clostridium phytofermentans).